The following is a 436-amino-acid chain: ABC transporter permease YtrF (436 aa).

An N-terminal signal peptide occupies residues 1-31 (MRFKDQVHFIRRNMKKNRLRVFMTILATTMA). Cysteine 32 carries the N-palmitoyl cysteine lipid modification. A lipid anchor (S-diacylglycerol cysteine) is attached at cysteine 32. The stretch at 115-165 (NMNDELKANMELEKGRVAKSENEIVVGYDFAKRLLTKKESEEYNKKIEEAK) forms a coiled coil. 3 helical membrane-spanning segments follow: residues 293–313 (FKIGLIFVGCIAVIISAIGIF), 350–370 (YIGILGCVIGIIISYGVSYLV), and 396–416 (IPASLVIIAVVICGGVAVISG).

The protein belongs to the ABC-4 integral membrane protein family. In terms of assembly, the complex is composed of 2 ATP-binding proteins (YtrB and YtrE), 2 transmembrane proteins (YtrC and YtrD) and a solute-binding protein (YtrF).

The protein resides in the cell membrane. Its function is as follows. Part of the ABC transporter complex YtrBCDEF that plays a role in acetoin utilization during stationary phase and sporulation. This chain is ABC transporter permease YtrF (ytrF), found in Bacillus subtilis (strain 168).